The sequence spans 122 residues: SLMQFKTLIMKIAGRSGIWYYGSYGCYCGGGGQGRPQDASDRCCFVHDCCYGKVTGCNPKMDVYTYTEENGAIVCGGDDPCKKQICECDKDAAICFRDNIDTYDNKYWFFPAKNCQEESEPC.

7 disulfides stabilise this stretch: Cys26/Cys115, Cys28/Cys44, Cys43/Cys95, Cys49/Cys122, Cys50/Cys88, Cys57/Cys81, and Cys75/Cys86. 3 residues coordinate Ca(2+): Tyr27, Gly29, and Gly31. Residue His47 is part of the active site. Residue Asp48 participates in Ca(2+) binding. Residue Asp89 is part of the active site.

The protein belongs to the phospholipase A2 family. Group II subfamily. D49 sub-subfamily. Requires Ca(2+) as cofactor. Expressed by the venom gland.

It is found in the secreted. The catalysed reaction is a 1,2-diacyl-sn-glycero-3-phosphocholine + H2O = a 1-acyl-sn-glycero-3-phosphocholine + a fatty acid + H(+). PLA2 catalyzes the calcium-dependent hydrolysis of the 2-acyl groups in 3-sn-phosphoglycerides. This chain is Acidic phospholipase A2 A', found in Gloydius halys (Chinese water mocassin).